The sequence spans 737 residues: Ribosome-releasing factor 2, mitochondrial (737 aa).

The transit peptide at M1–Y29 directs the protein to the mitochondrion. The 280-residue stretch at S31–E310 folds into the tr-type G domain. Residues A40 to T47, D104 to H108, and N158 to D161 contribute to the GTP site.

Belongs to the TRAFAC class translation factor GTPase superfamily. Classic translation factor GTPase family. EF-G/EF-2 subfamily.

Its subcellular location is the mitochondrion. Mitochondrial GTPase that mediates the disassembly of ribosomes from messenger RNA at the termination of mitochondrial protein biosynthesis. Not involved in the GTP-dependent ribosomal translocation step during translation elongation. This is Ribosome-releasing factor 2, mitochondrial from Drosophila persimilis (Fruit fly).